Here is a 256-residue protein sequence, read N- to C-terminus: Trans-aconitate 2-methyltransferase (256 aa).

This sequence belongs to the methyltransferase superfamily. Tam family.

The protein localises to the cytoplasm. It carries out the reaction trans-aconitate + S-adenosyl-L-methionine = (E)-3-(methoxycarbonyl)pent-2-enedioate + S-adenosyl-L-homocysteine. Functionally, catalyzes the S-adenosylmethionine monomethyl esterification of trans-aconitate. This Rhizobium etli (strain ATCC 51251 / DSM 11541 / JCM 21823 / NBRC 15573 / CFN 42) protein is Trans-aconitate 2-methyltransferase.